Reading from the N-terminus, the 300-residue chain is Geranyl diphosphate 2-C-methyltransferase (300 aa).

A disordered region spans residues 1–24; it reads MAAASAPVPGPGGASSTARGRIPA.

Belongs to the geranyl diphosphate 2-C-methyltransferase family. Mg(2+) serves as cofactor.

The catalysed reaction is (2E)-geranyl diphosphate + S-adenosyl-L-methionine = (E)-2-methylgeranyl diphosphate + S-adenosyl-L-homocysteine + H(+). In terms of biological role, catalyzes the SAM-dependent methylation of geranyl diphosphate (GPP) to yield (E)-2-methylgeranyl diphosphate (2-MeGPP). This is Geranyl diphosphate 2-C-methyltransferase (gdpmt) from Streptomyces lasalocidi (Streptomyces lasaliensis).